Here is a 95-residue protein sequence, read N- to C-terminus: Putative septation protein SpoVG (95 aa).

The protein belongs to the SpoVG family.

Its function is as follows. Could be involved in septation. This chain is Putative septation protein SpoVG, found in Clostridium botulinum (strain ATCC 19397 / Type A).